We begin with the raw amino-acid sequence, 209 residues long: Rac-like GTP-binding protein ARAC9 (209 aa).

G25–T32 serves as a coordination point for GTP. An Effector region motif is present at residues Y47–F55. GTP-binding positions include D72–Q76 and T130–D133. Residue C206 is modified to Cysteine methyl ester. C206 carries S-geranylgeranyl cysteine lipidation. Positions H207–L209 are cleaved as a propeptide — removed in mature form.

Belongs to the small GTPase superfamily. Rho family. As to quaternary structure, interacts with SPK1.

It is found in the cytoplasm. The protein localises to the membrane. Inactive GDP-bound Rho GTPases reside in the cytosol, are found in a complex with Rho GDP-dissociation inhibitors (Rho GDIs), and are released from the GDI protein in order to translocate to membranes upon activation. This chain is Rac-like GTP-binding protein ARAC9 (ARAC9), found in Arabidopsis thaliana (Mouse-ear cress).